We begin with the raw amino-acid sequence, 160 residues long: RTX-II toxin-activating lysine-acyltransferase ApxIIC (160 aa).

Catalysis depends on residues His-23 and Asp-92.

The protein belongs to the RTX toxin acyltransferase family. In terms of assembly, homodimer.

Its subcellular location is the cytoplasm. It catalyses the reaction a fatty acyl-[ACP] + L-lysyl-[protein] = N(6)-(fatty acyl)-L-lysyl-[protein] + holo-[ACP] + H(+). In terms of biological role, protein-lysine acyltransferase that catalyzes fatty acylation of the protoxin, thereby converting it to the active toxin. The sequence is that of RTX-II toxin-activating lysine-acyltransferase ApxIIC (apxIIC) from Actinobacillus pleuropneumoniae (Haemophilus pleuropneumoniae).